Here is a 134-residue protein sequence, read N- to C-terminus: Biopolymer transport protein exbD2 (134 aa).

At 1 to 17 (MRLGRRTSKQEEAQIDL) the chain is on the cytoplasmic side. Residues 18 to 38 (TSMLDIVFIMLIFFIVTSSFV) form a helical membrane-spanning segment. The Periplasmic portion of the chain corresponds to 39–134 (RESGVEVNRP…KSIALAAEKP (96 aa)).

Belongs to the ExbD/TolR family. In terms of assembly, the accessory proteins ExbB and ExbD seem to form a complex with TonB.

The protein localises to the cell inner membrane. Involved in the TonB-dependent energy-dependent transport of various receptor-bound substrates. The polypeptide is Biopolymer transport protein exbD2 (exbD2) (Vibrio cholerae serotype O1 (strain ATCC 39315 / El Tor Inaba N16961)).